We begin with the raw amino-acid sequence, 234 residues long: Small ribosomal subunit protein uS2 (234 aa).

The protein belongs to the universal ribosomal protein uS2 family.

This chain is Small ribosomal subunit protein uS2, found in Prochlorococcus marinus subsp. pastoris (strain CCMP1986 / NIES-2087 / MED4).